The following is a 223-amino-acid chain: Adenylate kinase 4, mitochondrial (223 aa).

15–20 (GSGKGT) is a binding site for a ribonucleoside 5'-triphosphate. Positions 35–64 (SSGHLLRENLKTGTEVGDVAKQYLEKGLLV) are NMP. Residues serine 36 and arginine 41 each contribute to the AMP site. An N6-succinyllysine modification is found at lysine 60. AMP-binding positions include 62–64 (LLV), 89–92 (GFPR), and glutamine 96. The segment at 125–162 (RRWIHPSSGRVYNLDFNPPQVQGIDDITGEPLVQQEDD) is LID. A ribonucleoside 5'-triphosphate-binding positions include arginine 126 and 135 to 136 (VY). AMP is bound at residue arginine 170. Lysine 175 carries the post-translational modification N6-acetyllysine. An N6-acetyllysine; alternate mark is found at lysine 179 and lysine 186. 2 positions are modified to N6-succinyllysine; alternate: lysine 179 and lysine 186. Threonine 199 contacts a ribonucleoside 5'-triphosphate.

Belongs to the adenylate kinase family. AK3 subfamily. As to quaternary structure, monomer. Interacts with SLC25A5/ANT2. Expressed in kidney, liver, stomach, brain, spinal cord, heart, ovary, oviduct, colon, jejunum, ileum and testis (at protein level). In the brain, expressed in the pyramidal cells of the cerebrum and glial cells in the cerebellum (at protein level). In the heart, expressed by myocytes (at protein level). In the kidney, expressed in the proximal to distal tubule in the cortex and the outer and inner zones of the medulla (at protein level). In the stomach, expressed in stratified squamous epithelia in the forestomach and in the gastric pit and mucus producing cells of the glandular stomach (at protein level). Expressed in epithelial cells of the jejunum, ileum, and colon (at protein level). In the testis, expressed by spermatocytes (at protein level). In the ovaries, expressed by oocytes, follicular epithelial cells, and corpus luteum cells (at protein level). In the oviduct, expressed in the epithelia of the isthmus and the ciliated cells of the ampulla (at protein level). Expressed in the pyramidal cells in the hippocampus.

Its subcellular location is the mitochondrion matrix. It carries out the reaction a ribonucleoside 5'-phosphate + ATP = a ribonucleoside 5'-diphosphate + ADP. The catalysed reaction is AMP + ATP = 2 ADP. It catalyses the reaction GTP + AMP = GDP + ADP. The enzyme catalyses CMP + ATP = CDP + ADP. It carries out the reaction GTP + CMP = CDP + GDP. The catalysed reaction is dAMP + ATP = dADP + ADP. It catalyses the reaction dCMP + ATP = dCDP + ADP. The enzyme catalyses a 2'-deoxyribonucleoside 5'-diphosphate + ATP = a 2'-deoxyribonucleoside 5'-triphosphate + ADP. It carries out the reaction a ribonucleoside 5'-diphosphate + ATP = a ribonucleoside 5'-triphosphate + ADP. The catalysed reaction is GDP + ATP = GTP + ADP. It catalyses the reaction CDP + GTP = CTP + GDP. The enzyme catalyses CDP + ATP = CTP + ADP. It carries out the reaction UDP + ATP = UTP + ADP. The catalysed reaction is GTP + UDP = UTP + GDP. It catalyses the reaction dADP + GTP = dATP + GDP. The enzyme catalyses dCDP + GTP = dCTP + GDP. It carries out the reaction dCDP + ATP = dCTP + ADP. The catalysed reaction is dGDP + ATP = dGTP + ADP. It catalyses the reaction dTDP + GTP = dTTP + GDP. The enzyme catalyses dTDP + ATP = dTTP + ADP. In terms of biological role, broad-specificity mitochondrial nucleoside phosphate kinase involved in cellular nucleotide homeostasis by catalyzing nucleoside-phosphate interconversions. Similar to other adenylate kinases, preferentially catalyzes the phosphorylation of the nucleoside monophosphate AMP with ATP as phosphate donor to produce ADP. Phosphorylates only AMP when using GTP as phosphate donor. In vitro, can also catalyze the phosphorylation of CMP, dAMP and dCMP and use GTP as an alternate phosphate donor. Moreover, exhibits a diphosphate kinase activity, producing ATP, CTP, GTP, UTP, TTP, dATP, dCTP and dGTP from the corresponding diphosphate substrates with either ATP or GTP as phosphate donors. Plays a role in controlling cellular ATP levels by regulating phosphorylation and activation of the energy sensor protein kinase AMPK. Plays a protective role in the cellular response to oxidative stress. This chain is Adenylate kinase 4, mitochondrial, found in Mus musculus (Mouse).